Consider the following 668-residue polypeptide: MADDLRAGGVLEPIAMVPPRPDLAAEKEPASWKEGLFLDADPCSDQGYHANPGATVKTLIPEGKTPFPRIIQTNELLFYERFRAYQDYILADCKASEVKEFTVSFLEKVLEPSGWWAVWHTNVFEVLVEVTNVDFPSLKAVVRLAEPCIYESKLSTFTLANVKELLDLKEFHLPLQELWVVSDDSHEFHQMALAIEHVRFFYKHIWRSWDEEEEDEYDYFVRCVEPRLRLYYDILEDRVPSGLIVDYHNLLSQCEESYRKFLNLRSSLSNCNSDSEQENISMVEGLNLYSEIEQLKQKLKLIENPLLRYVFGYQKNSNIQGKGTRQNGQKVIHVVSSTMKTGLLRSLFKDRFCEESCKEETEIKFHSDLLSGINACYDGDTVIICPGHYVVHGTCSIADSIELEGYGLPDDIVIEKRGKGDTFVDCTGMDVKISGIKFIQHDSVEGILIIHHGKTTLENCVLQCETTGVTVRTSAELFMKNSDVYGAKGAGIEIYPGSKCTLTDNGIHHCKEGILIKDFLDEHYDIPKISMINNVIHNNEGYGVVLVKPTIFCDLQENTQDEINDNMVQKNKEADVTEGLDLEEMLQCVASKMEPYATADFNEQAKGNCEIINELLAISMQKGRMKKRLSELGITQADDNIMSQEMFIEIMGNQFKWNGKGSFGTFLY.

N-acetylalanine is present on A2. Phosphoserine occurs at positions 31, 44, and 273. 5 PbH1 repeats span residues G428 to H451, H452 to T473, S474 to P496, G497 to D518, and I526 to K548. S630 is subject to Phosphoserine.

As to quaternary structure, interacts directly with isoform p52shc of SHC1 via its SH2 domain. Interacts with TRIM71; leading to enhanced SHCBP1 protein stability. Interacts with both members of the centralspindlin complex, KIF23 and RACGAP1. Expressed in spleen, lung and heart with higher expression in testis. No expression in brain, liver and skeletal muscle. Elevated expression in actively cycling cells.

It is found in the midbody. The protein localises to the cytoplasm. Its subcellular location is the cytoskeleton. It localises to the spindle. Its function is as follows. May play a role in signaling pathways governing cellular proliferation, cell growth and differentiation. May be a component of a novel signaling pathway downstream of Shc. Acts as a positive regulator of FGF signaling in neural progenitor cells. The sequence is that of SHC SH2 domain-binding protein 1 (Shcbp1) from Mus musculus (Mouse).